Here is a 309-residue protein sequence, read N- to C-terminus: Fructosamine-3-kinase (309 aa).

An N-acetylmethionine modification is found at Met-1. Residue 89–91 participates in ATP binding; it reads EHL. The active-site Proton acceptor is Asp-217.

The protein belongs to the fructosamine kinase family. In terms of assembly, monomer. Expressed in red blood cells, brain, heart, kidney and muscle. Lower expression is observed in liver. Not expressed in lung, spleen, testis and thymus.

The enzyme catalyses N(6)-(D-fructosyl)-L-lysyl-[protein] + ATP = N(6)-(3-O-phospho-D-fructosyl)-L-lysyl-[protein] + ADP + H(+). It carries out the reaction N(6)-D-ribulosyl-L-lysyl-[protein] + ATP = N(6)-(3-O-phospho-D-ribulosyl)-L-lysyl-[protein] + ADP + H(+). The catalysed reaction is N(6)-(D-psicosyl)-L-lysyl-[protein] + ATP = N(6)-(3-O-phospho-D-psicosyl)-L-lysyl-[protein] + ADP + H(+). Functionally, fructosamine-3-kinase involved in protein deglycation by mediating phosphorylation of fructoselysine residues on glycated proteins, to generate fructoselysine-3 phosphate. Fructoselysine-3 phosphate adducts are unstable and decompose under physiological conditions. Involved in intracellular deglycation in erythrocytes and pancreatic islets. Involved in the response to oxidative stress by mediating deglycation of NFE2L2/NRF2, glycation impairing NFE2L2/NRF2 function. Also able to phosphorylate psicosamines and ribulosamines. This Mus musculus (Mouse) protein is Fructosamine-3-kinase.